Reading from the N-terminus, the 204-residue chain is Urease accessory protein UreG (204 aa).

Position 11–18 (Gly-11–Thr-18) interacts with GTP.

Belongs to the SIMIBI class G3E GTPase family. UreG subfamily. Homodimer. UreD, UreF and UreG form a complex that acts as a GTP-hydrolysis-dependent molecular chaperone, activating the urease apoprotein by helping to assemble the nickel containing metallocenter of UreC. The UreE protein probably delivers the nickel.

It localises to the cytoplasm. Its function is as follows. Facilitates the functional incorporation of the urease nickel metallocenter. This process requires GTP hydrolysis, probably effectuated by UreG. The polypeptide is Urease accessory protein UreG (Staphylococcus aureus (strain MSSA476)).